A 157-amino-acid polypeptide reads, in one-letter code: Protein NrdI (157 aa).

It belongs to the NrdI family.

Functionally, probably involved in ribonucleotide reductase function. The sequence is that of Protein NrdI from Mycoplasma mycoides subsp. mycoides SC (strain CCUG 32753 / NCTC 10114 / PG1).